A 341-amino-acid polypeptide reads, in one-letter code: S-adenosylmethionine:tRNA ribosyltransferase-isomerase (341 aa).

The protein belongs to the QueA family. In terms of assembly, monomer.

It localises to the cytoplasm. It carries out the reaction 7-aminomethyl-7-carbaguanosine(34) in tRNA + S-adenosyl-L-methionine = epoxyqueuosine(34) in tRNA + adenine + L-methionine + 2 H(+). Its pathway is tRNA modification; tRNA-queuosine biosynthesis. Transfers and isomerizes the ribose moiety from AdoMet to the 7-aminomethyl group of 7-deazaguanine (preQ1-tRNA) to give epoxyqueuosine (oQ-tRNA). In Chlorobium phaeobacteroides (strain DSM 266 / SMG 266 / 2430), this protein is S-adenosylmethionine:tRNA ribosyltransferase-isomerase.